The sequence spans 138 residues: ATP synthase epsilon chain (138 aa).

It belongs to the ATPase epsilon chain family. F-type ATPases have 2 components, CF(1) - the catalytic core - and CF(0) - the membrane proton channel. CF(1) has five subunits: alpha(3), beta(3), gamma(1), delta(1), epsilon(1). CF(0) has three main subunits: a, b and c.

The protein resides in the cell inner membrane. Its function is as follows. Produces ATP from ADP in the presence of a proton gradient across the membrane. The protein is ATP synthase epsilon chain of Geotalea uraniireducens (strain Rf4) (Geobacter uraniireducens).